A 326-amino-acid chain; its full sequence is Tagatose 1,6-diphosphate aldolase (326 aa).

It belongs to the aldolase LacD family.

It catalyses the reaction D-tagatofuranose 1,6-bisphosphate = D-glyceraldehyde 3-phosphate + dihydroxyacetone phosphate. The protein operates within carbohydrate metabolism; D-tagatose 6-phosphate degradation; D-glyceraldehyde 3-phosphate and glycerone phosphate from D-tagatose 6-phosphate: step 2/2. The polypeptide is Tagatose 1,6-diphosphate aldolase (Staphylococcus aureus (strain MSSA476)).